The following is a 124-amino-acid chain: MKTMIAWLVLLTFAAALCFADEGLKQEHMNERKKSRFREDIPDEISEDLLLQEMEAMEAELLEKEMRMEENRNSREKRCLGEDISCGEKPGDLVRMPCCAKYECKETAGYWWYQKRFCVKKKSG.

The first 20 residues, 1 to 20 (MKTMIAWLVLLTFAAALCFA), serve as a signal peptide directing secretion. The propeptide occupies 21-78 (DEGLKQEHMNERKKSRFREDIPDEISEDLLLQEMEAMEAELLEKEMRMEENRNSREKR). Disulfide bonds link cysteine 79/cysteine 99, cysteine 86/cysteine 104, and cysteine 98/cysteine 118.

It belongs to the neurotoxin 14 (magi-1) family. 04 (ICK-6) subfamily. As to expression, expressed by the venom gland.

The protein localises to the secreted. Ion channel inhibitor. The sequence is that of U12-barytoxin-Tl1a from Trittame loki (Brush-footed trapdoor spider).